The chain runs to 446 residues: tRNA-2-methylthio-N(6)-dimethylallyladenosine synthase (446 aa).

The MTTase N-terminal domain maps to 5–121 (KYLYVETFGC…LPEIVRAAER (117 aa)). [4Fe-4S] cluster contacts are provided by C14, C50, C84, C159, C163, and C166. The Radical SAM core domain occupies 145-375 (GEGGVTRFVT…QTLQQQMKRE (231 aa)). In terms of domain architecture, TRAM spans 378-440 (ISFVGTRQLV…QNSLLGEIVT (63 aa)).

The protein belongs to the methylthiotransferase family. MiaB subfamily. Monomer. It depends on [4Fe-4S] cluster as a cofactor.

Its subcellular location is the cytoplasm. It catalyses the reaction N(6)-dimethylallyladenosine(37) in tRNA + (sulfur carrier)-SH + AH2 + 2 S-adenosyl-L-methionine = 2-methylsulfanyl-N(6)-dimethylallyladenosine(37) in tRNA + (sulfur carrier)-H + 5'-deoxyadenosine + L-methionine + A + S-adenosyl-L-homocysteine + 2 H(+). In terms of biological role, catalyzes the methylthiolation of N6-(dimethylallyl)adenosine (i(6)A), leading to the formation of 2-methylthio-N6-(dimethylallyl)adenosine (ms(2)i(6)A) at position 37 in tRNAs that read codons beginning with uridine. The chain is tRNA-2-methylthio-N(6)-dimethylallyladenosine synthase from Geobacter sulfurreducens (strain ATCC 51573 / DSM 12127 / PCA).